The chain runs to 668 residues: Receptor for retinol uptake STRA6 (668 aa).

A compositionally biased stretch (polar residues) spans 1-15; sequence MSTQAAGNQTSSGAT. The interval 1–28 is disordered; sequence MSTQAAGNQTSSGATDSEDSYDSWYIDE. At 1–51 the chain is on the extracellular side; that stretch reads MSTQAAGNQTSSGATDSEDSYDSWYIDEPQGGQELQPEGLVPSCQPNVPPS. The N-linked (GlcNAc...) asparagine glycan is linked to Asn8. A helical membrane pass occupies residues 52-72; it reads LYHTCLAVLSILVLFLLAMLV. Topologically, residues 73-101 are cytoplasmic; that stretch reads RRRQLWPRCGHGRPGLPSPVDFLTGDRPR. Residues 102-122 traverse the membrane as a helical segment; sequence TVPAAVFMVLFSSLCLLLPTE. Over 123-145 the chain is Extracellular; the sequence is DPLPFLSLASPPGRDGEAETSRG. The chain crosses the membrane as a helical span at residues 146–166; the sequence is PWKILALLYYPALYYPLAACA. At 167-169 the chain is on the cytoplasmic side; sequence TVR. A helical membrane pass occupies residues 170-190; it reads HGAAHLLGSLLSWAHLGVQVW. The Extracellular portion of the chain corresponds to 191-206; it reads QRAECPESPKIYKYYS. A helical transmembrane segment spans residues 207-227; it reads LLASLPLLLGLGFLSLWYPVQ. Over 228-296 the chain is Cytoplasmic; sequence LVRSFGHGAA…PQRGFRLPLK (69 aa). The tract at residues 236-294 is interaction with RBP1; it reads AATGSKGLQSSYSEEYLRTLLCQKKLKSSSHTCKRGFASQAWMYFRHSVYIPQRGFRLP. The helical transmembrane segment at 297–317 threads the bilayer; it reads LVLSVTLTGTAIYQVALLLLV. At 318–368 the chain is on the extracellular side; sequence GVVPTIQKVRAGITTDVSYLLAGFGIVLSEDRQEVVELVKHHLWALEVCYI. The helical transmembrane segment at 369 to 389 threads the bilayer; sequence SALVLSCLLTFLMLVHSLVTH. Residues 390 to 423 are Cytoplasmic-facing; the sequence is RTNLRALHRGGALDIGPLTQSPRPSRQAIFCWMS. The chain crosses the membrane as a helical span at residues 424-444; sequence FTAYQTAFTCLGLLVQQILFF. At 445-474 the chain is on the extracellular side; it reads LGTLTLAFLVFMPMLHGRNLLLLHYLKSSW. A helical membrane pass occupies residues 475–495; sequence PFWLTLALAVTLQNAAAHWAF. Topologically, residues 496-510 are cytoplasmic; it reads LDTHHGRPGLTNRRA. Positions 511–548 form an intramembrane region, helical; the sequence is LYAATFLLFPVNVLVGTMVAAWRVLLSALYNAVHLGRM. Residues 549-668 lie on the Cytoplasmic side of the membrane; it reads DLSLLPLRAA…PGARPNGAQP (120 aa). Tyr642 carries the post-translational modification Phosphotyrosine.

Homodimer. Interacts with JAK2 and STAT5. Interacts (via extracellular domains) with RBP4. Interacts (via cytoplasmic domains) with RBP1. Phosphorylated on tyrosine residues in response to RBP4 binding. Phosphorylation requires the presence of LRAT, suggesting it may be triggered by the uptake of retinol that is then metabolized within the cell to retinoids that function as signaling molecules. As to expression, expressed in placenta, spleen, retinal blood vessels, and in astrocyte perivascular endfeet. Not detected in the endothelial cells of the choriocapillaris (at protein level).

The protein localises to the cell membrane. Functionally, functions as a retinol transporter. Accepts all-trans retinol from the extracellular retinol-binding protein RBP4, facilitates retinol transport across the cell membrane, and then transfers retinol to the cytoplasmic retinol-binding protein RBP1. Retinol uptake is enhanced by LRAT, an enzyme that converts retinol to all-trans retinyl esters, the storage forms of vitamin A. Contributes to the activation of a signaling cascade that depends on retinol transport and LRAT-dependent generation of retinol metabolites that then trigger activation of JAK2 and its target STAT5, and ultimately increase the expression of SOCS3 and inhibit cellular responses to insulin. Important for the homeostasis of vitamin A and its derivatives, such as retinoic acid. STRA6-mediated transport is particularly important in the eye, and under conditions of dietary vitamin A deficiency. Does not transport retinoic acid. The sequence is that of Receptor for retinol uptake STRA6 (STRA6) from Bos taurus (Bovine).